Reading from the N-terminus, the 463-residue chain is NF-kappa-B-activating protein (463 aa).

A compositionally biased stretch (basic residues) spans 1-14 (MRSRSRSRSRQRER). The tract at residues 1-358 (MRSRSRSRSR…GGSLNQKDFG (358 aa)) is disordered. Composition is skewed to basic and acidic residues over residues 15-29 (RRSD…ERRT) and 39-71 (VSRE…DAVP). The span at 78–98 (SSPSRSSSSSSSDRSSSSRSP) shows a compositional bias: low complexity. Positions 107–125 (KSVERWPNDRYHENNDRRQ) are enriched in basic and acidic residues. Ser136, Ser189, and Ser191 each carry phosphoserine. A Phosphothreonine modification is found at Thr195. A compositionally biased stretch (basic residues) spans 208–238 (PKKKKKKGKRKHKKSEKKSKKKSKKSKKKKS). Positions 241-267 (ESSSSSSSSSSEDSSDESSSSSSSSSS) are enriched in low complexity. The span at 268–278 (DSEDESEEEDV) shows a compositional bias: acidic residues. Over residues 279–288 (WLEKTADGIK) the composition is skewed to basic and acidic residues. Residues 289–312 (KPKKKKSSTSKKDKKSKKKKKKRK) are compositionally biased toward basic residues. Residues 330 to 340 (KNKESASHNDE) are compositionally biased toward basic and acidic residues.

The protein belongs to the NKAP family.

It is found in the nucleus. In terms of biological role, tumor suppressor involved in maintaining genome integrity. Influences gene expression and mRNA splicing. The protein is NF-kappa-B-activating protein of Drosophila melanogaster (Fruit fly).